The primary structure comprises 49 residues: uncharacterized protein (49 aa).

The first 22 residues, methionine 1–serine 22, serve as a signal peptide directing secretion.

The protein localises to the secreted. This is an uncharacterized protein from Dictyostelium discoideum (Social amoeba).